Here is a 465-residue protein sequence, read N- to C-terminus: Catalase cnsD (465 aa).

Histidine 39 is an active-site residue. Tyrosine 331 is a binding site for heme.

The protein belongs to the catalase family. The cofactor is heme.

It participates in alkaloid biosynthesis. In terms of biological role, catalase; part of the gene cluster that mediates the biosynthesis of communesins, a prominent class of indole alkaloids with great potential as pharmaceuticals. Communesins are biosynthesized by the coupling of tryptamine and aurantioclavine, two building blocks derived from L-tryptophan. The L-tryptophan decarboxylase cnsB converts L-tryptophan to tryptamine, whereas the tryptophan dimethylallyltransferase cnsF converts L-tryptophan to 4-dimethylallyl tryptophan which is further transformed to aurantioclavine by the aurantioclavine synthase cnsA, probably aided by the catalase cnsD. The cytochrome P450 monooxygenase cnsC catalyzes the heterodimeric coupling between the two different indole moieties, tryptamine and aurantioclavine, to construct vicinal quaternary stereocenters and yield the heptacyclic communesin scaffold. The O-methyltransferase cnsE then methylates the communesin scaffold to produce communesin K, the simplest characterized communesin that contains the heptacyclic core. The dioxygenase cnsJ converts communesin K into communesin I. Acylation to introduce the hexadienyl group at position N16 of communesin I by the acyltransferase cnsK leads to the production of communesin B. The hexadienyl group is produced by the highly reducing polyketide synthase cnsI, before being hydrolytically removed from cnsI by the serine hydrolase cnsH, converted into hexadienyl-CoA by the CoA ligase cnsG, and then transferred to communesin I by cnsK. Surprisingly, cnsK may also be a promiscuous acyltransferase that can tolerate a range of acyl groups, including acetyl-, propionyl-, and butyryl-CoA, which lead to communesins A, G and H respectively. The roles of the alpha-ketoglutarate-dependent dioxygenases cnsM and cnsP have still to be determined. This Penicillium expansum (Blue mold rot fungus) protein is Catalase cnsD.